The primary structure comprises 164 residues: Putative pre-16S rRNA nuclease (164 aa).

This sequence belongs to the YqgF nuclease family.

The protein localises to the cytoplasm. In terms of biological role, could be a nuclease involved in processing of the 5'-end of pre-16S rRNA. This is Putative pre-16S rRNA nuclease from Rhizobium etli (strain CIAT 652).